Reading from the N-terminus, the 349-residue chain is DCD domain-containing protein NRP (349 aa).

The interval 157 to 201 (NNNKNKGIDEDHQIQKGGKKNRKNQQNNNNQRNEDDKNNGLDKRF) is disordered. The span at 188 to 201 (RNEDDKNNGLDKRF) shows a compositional bias: basic and acidic residues. Positions 214–346 (ETIGGYIFVC…VLSLLDIFAD (133 aa)) constitute a DCD domain.

Interacts with CRY2 in the cytoplasm. Interacts with Verticillium dahliae PevD1. Interacts with FYPP3. In terms of tissue distribution, highly expressed in sensecent leaves, cauline leaves and sepals. Expressed in the shoot apical meristem, leaf veins, central cylinder, root hair zone, root tips, rosette leaves, flowers and siliques.

Its subcellular location is the cytoplasm. Contributes to the initial phase of responses to abiotic and biotic stress signals. Binds FYPP3 and facilitates FYPP3 degradation to promote abscisic acid (ABA) response. This chain is DCD domain-containing protein NRP, found in Arabidopsis thaliana (Mouse-ear cress).